The chain runs to 309 residues: Olfactory receptor 4B1 (309 aa).

Residues 1 to 23 (MASTSNVTELIFTGLFQDPAVQS) lie on the Extracellular side of the membrane. The N-linked (GlcNAc...) asparagine glycan is linked to Asn6. Residues 24–47 (VCFVVFLPVYLATVVGNGLIVLTV) form a helical membrane-spanning segment. The Cytoplasmic portion of the chain corresponds to 48-55 (SISKSLDS). Residues 56 to 77 (PMYFFLSCLSLVEISYSSTIAP) traverse the membrane as a helical segment. The Extracellular segment spans residues 78 to 98 (KFIIDLLAKIKTISLEGCLTQ). A disulfide bond links Cys95 and Cys187. Residues 99–118 (IFFFHFFGVAEILLIVVMAY) traverse the membrane as a helical segment. At 119 to 137 (DCYVAICKPLHYMNIISRQ) the chain is on the cytoplasmic side. A helical transmembrane segment spans residues 138–156 (LCHLLVAGSWLGGFCHSII). The Extracellular segment spans residues 157–193 (QILVIIQLPFCGPNVIDHYFCDLQPLFKLACTDTFME). The helical transmembrane segment at 194-217 (GVIVLANSGLFSVFSFLILVSSYI) threads the bilayer. The Cytoplasmic portion of the chain corresponds to 218–233 (VILVNLRNHSAEGRHK). A helical membrane pass occupies residues 234-256 (ALSTCASHITVVILFFGPAIFLY). Residues 257-267 (MRPSSTFTEDK) are Extracellular-facing. The helical transmembrane segment at 268–287 (LVAVFYTVITPMLNPIIYTL) threads the bilayer. Topologically, residues 288-309 (RNAEVKIAIRRLWSKKENPGRE) are cytoplasmic.

The protein belongs to the G-protein coupled receptor 1 family.

The protein localises to the cell membrane. Odorant receptor. The polypeptide is Olfactory receptor 4B1 (OR4B1) (Homo sapiens (Human)).